Consider the following 200-residue polypeptide: Small ribosomal subunit protein uS4 (200 aa).

The disordered stretch occupies residues 21–42 (GTGKELQKRPYPPGQHGPGQRR). One can recognise an S4 RNA-binding domain in the interval 92–155 (SRLDNLVYRL…RNLQVIKEAI (64 aa)).

This sequence belongs to the universal ribosomal protein uS4 family. As to quaternary structure, part of the 30S ribosomal subunit. Contacts protein S5. The interaction surface between S4 and S5 is involved in control of translational fidelity.

Its function is as follows. One of the primary rRNA binding proteins, it binds directly to 16S rRNA where it nucleates assembly of the body of the 30S subunit. With S5 and S12 plays an important role in translational accuracy. This chain is Small ribosomal subunit protein uS4, found in Geobacillus thermodenitrificans (strain NG80-2).